We begin with the raw amino-acid sequence, 127 residues long: Holo-[acyl-carrier-protein] synthase (127 aa).

The Mg(2+) site is built by Asp-8 and Glu-56.

The protein belongs to the P-Pant transferase superfamily. AcpS family. It depends on Mg(2+) as a cofactor.

It is found in the cytoplasm. It catalyses the reaction apo-[ACP] + CoA = holo-[ACP] + adenosine 3',5'-bisphosphate + H(+). Its function is as follows. Transfers the 4'-phosphopantetheine moiety from coenzyme A to a Ser of acyl-carrier-protein. The polypeptide is Holo-[acyl-carrier-protein] synthase (Caldanaerobacter subterraneus subsp. tengcongensis (strain DSM 15242 / JCM 11007 / NBRC 100824 / MB4) (Thermoanaerobacter tengcongensis)).